We begin with the raw amino-acid sequence, 953 residues long: Scaffold attachment factor B2 (953 aa).

Residues 1-29 (MAETLPGSGDSGPGTASLGPGVAETGTRR) form a disordered region. Alanine 2 carries the post-translational modification N-acetylalanine. The SAP domain maps to 30–64 (LSELRVIDLRAELKKRNLDTGGNKSVLMERLKKAV). At serine 54 the chain carries Phosphoserine. A Glycyl lysine isopeptide (Lys-Gly) (interchain with G-Cter in SUMO1); alternate cross-link involves residue lysine 65. Residue lysine 65 forms a Glycyl lysine isopeptide (Lys-Gly) (interchain with G-Cter in SUMO2); alternate linkage. The interval 91–114 (KGLKMEEEGTEDNGLEDDSRDGQE) is disordered. A Glycyl lysine isopeptide (Lys-Gly) (interchain with G-Cter in SUMO2) cross-link involves residue lysine 94. Positions 98–114 (EGTEDNGLEDDSRDGQE) are enriched in acidic residues. 2 positions are modified to phosphoserine: serine 109 and serine 158. Residues lysine 188 and lysine 199 each participate in a glycyl lysine isopeptide (Lys-Gly) (interchain with G-Cter in SUMO2) cross-link. Threonine 201 carries the phosphothreonine modification. Serine 207 carries the phosphoserine modification. A disordered region spans residues 219–404 (ILGETCKSEP…KDEKGRVGSG (186 aa)). A compositionally biased stretch (basic and acidic residues) spans 224–233 (CKSEPVKEES). Lysine 230 is covalently cross-linked (Glycyl lysine isopeptide (Lys-Gly) (interchain with G-Cter in SUMO)). Over residues 274–285 (SESTAHAQSSKA) the composition is skewed to polar residues. The segment covering 292–308 (VKREPAEQPGDGERTDC) has biased composition (basic and acidic residues). Lysine 293 is covalently cross-linked (Glycyl lysine isopeptide (Lys-Gly) (interchain with G-Cter in SUMO)). The span at 318–329 (EQSSAASELAEA) shows a compositional bias: low complexity. The span at 345–358 (EARDSKEDGRKFDF) shows a compositional bias: basic and acidic residues. Residues 370–382 (ESSTSEGADQKMS) show a composition bias toward polar residues. Glycyl lysine isopeptide (Lys-Gly) (interchain with G-Cter in SUMO2) cross-links involve residues lysine 380, lysine 385, lysine 388, lysine 391, and lysine 395. A compositionally biased stretch (basic and acidic residues) spans 383 to 400 (SFKEEKDIKPIIKDEKGR). Residues 407 to 485 (RNLWVSGLSS…RMISVEKAKN (79 aa)) enclose the RRM domain. Serine 507 and serine 513 each carry phosphoserine. Glycyl lysine isopeptide (Lys-Gly) (interchain with G-Cter in SUMO2) cross-links involve residues lysine 517, lysine 524, lysine 525, lysine 541, lysine 542, and lysine 551. Residues 525-551 (KEEKIEKKEEKKPEDIKKEEKDQDELK) are compositionally biased toward basic and acidic residues. Disordered regions lie at residues 525–665 (KEEK…RLQR) and 684–953 (RERL…TRRY). The segment covering 555-564 (TNRSRVTKSG) has biased composition (polar residues). The span at 567–579 (GMERTVVMDKSKG) shows a compositional bias: basic and acidic residues. Residues lysine 578, lysine 586, and lysine 608 each participate in a glycyl lysine isopeptide (Lys-Gly) (interchain with G-Cter in SUMO2) cross-link. Basic and acidic residues-rich tracts occupy residues 590 to 665 (RSKE…RLQR) and 684 to 820 (RERL…DSRD). The interaction with SAFB1 stretch occupies residues 600-953 (DRKSESKEKR…PPYPHFTRRY (354 aa)). Lysine 616 is covalently cross-linked (Glycyl lysine isopeptide (Lys-Gly) (interchain with G-Cter in SUMO2); alternate). N6-acetyllysine; alternate is present on lysine 616. A Nuclear localization signal motif is present at residues 713–730 (RRQQEQLRYEQERRPGRR). Phosphoserine is present on residues serine 787 and serine 832. Residues 843 to 859 (GGRDWGEHNQRLEEHQA) show a composition bias toward basic and acidic residues. Gly residues predominate over residues 881-890 (GERGLSGPSG). Serine 886 is modified (phosphoserine). Arginine 897 and arginine 903 each carry omega-N-methylarginine. A compositionally biased stretch (gly residues) spans 899–927 (GVAGRGGFAQGGHSQGHVVPGGGLEGGGV).

Interacts with SAFB/SAFB1 and SCAM1. Interacts with isoform 2 SRPK1 and inhibits its activity. Expressed at high levels in the CNS and at low levels in the liver. Expressed in a wide number of breast cancer cell lines.

The protein resides in the cytoplasm. It is found in the nucleus. Functionally, binds to scaffold/matrix attachment region (S/MAR) DNA. Can function as an estrogen receptor corepressor and can also inhibit cell proliferation. The protein is Scaffold attachment factor B2 (SAFB2) of Homo sapiens (Human).